The following is a 387-amino-acid chain: Phosphoglycerate kinase (387 aa).

Residues 21–23 (DLN), R36, 59–62 (HLGR), R113, and R146 contribute to the substrate site. ATP-binding positions include K197, E314, and 340-343 (GGDT).

Belongs to the phosphoglycerate kinase family. Monomer.

It is found in the cytoplasm. It carries out the reaction (2R)-3-phosphoglycerate + ATP = (2R)-3-phospho-glyceroyl phosphate + ADP. It participates in carbohydrate degradation; glycolysis; pyruvate from D-glyceraldehyde 3-phosphate: step 2/5. The protein is Phosphoglycerate kinase of Pectobacterium atrosepticum (strain SCRI 1043 / ATCC BAA-672) (Erwinia carotovora subsp. atroseptica).